A 494-amino-acid polypeptide reads, in one-letter code: Cysteine--tRNA ligase (494 aa).

Cys-29 serves as a coordination point for Zn(2+). A 'HIGH' region motif is present at residues 31 to 41 (VTVYDHCHIGH). The Zn(2+) site is built by Cys-209, His-234, and Glu-238. Residues 266–270 (KMSKS) carry the 'KMSKS' region motif. Lys-269 is an ATP binding site.

It belongs to the class-I aminoacyl-tRNA synthetase family. Monomer. It depends on Zn(2+) as a cofactor.

It localises to the cytoplasm. It carries out the reaction tRNA(Cys) + L-cysteine + ATP = L-cysteinyl-tRNA(Cys) + AMP + diphosphate. This is Cysteine--tRNA ligase from Geotalea daltonii (strain DSM 22248 / JCM 15807 / FRC-32) (Geobacter daltonii).